The sequence spans 425 residues: MNEHSDDVYVRARLRNQFGYMTWVPEYVEDRISSKKGILQRYEDYQQKQAKAQEVKTDSLVKYEGAKDVPRNLLRIYRGEADTSALARYEEVVSQKPQWHAPWKLTRVINGHTGWVRCVCVDPVDNAWFATGSNDSTIRVWDLATGKLKVTLQGHIMTVRDICISARHPYMFSASQDKLVKCWDLERNTVVRDFHGTLSGVHSVDLHPSLDLIVSAGRDSVVRVWDIRSRSCVLTLAGHRGPINKVRCLPVDPQIVSCSTDATVKLWDLVAGKPMKTLTHHKRNVRDLAFNPTEFSFASACTDDIRSWKLVDGQLLTNFNSEALGIVNTLACNQDGVLFAGGDTGELSFFDYKTGHKFQKLETTAMPGSLESEKGVLASTFDRTGLRLLTCERDKSIKIWKHIDGATQDSHPGLPWNPSLVRQRF.

WD repeat units follow at residues 111-151, 154-193, 196-235, 238-279, 281-320, 322-360, and 371-410; these read GHTG…LKVT, GHIMTVRDICISARHPYMFSASQDKLVKCWDLERNTVVRD, GTLSGVHSVDLHPSLDLIVSAGRDSVVRVWDIRSRSCVLT, GHRG…KTLT, HKRNVRDLAFNPTEFSFASACTDDIRSWKLVDGQLLTNFN, EALGIVNTLACNQDGVLFAGGDTGELSFFDYKTGHKFQK, and ESEKGVLASTFDRTGLRLLTCERDKSIKIWKHIDGATQDS.

It belongs to the WD repeat PRL1/PRL2 family. As to quaternary structure, associated with the spliceosome.

It is found in the cytoplasm. It localises to the nucleus. Involved in pre-mRNA splicing and required for cell cycle progression at G2/M. This is Pre-mRNA-splicing factor PRP46 (PRP46) from Eremothecium gossypii (strain ATCC 10895 / CBS 109.51 / FGSC 9923 / NRRL Y-1056) (Yeast).